Reading from the N-terminus, the 502-residue chain is MRGLCEFYWQEFGIKGFSVAQKPFGATYVWSSIINTLQTQVEVKKRRHRLKRHNDCFVGSEAVDVIFSHLIQNKYFGDVDIPRAKVVRVCQALMDYKVFEAIPTKVFGKDKKPTFEDSSCSLYRFTTIPNQDSQLGKENKLCSPSRYADALFKSSDIKSASLEDLWENLSLKPANSPHVNISATLSPQVINEVWQEETIGRLLQLVDLPLLDSLLKQQEAVPKVPQSKRQSDMVNSSNYLDRGILKAYSDSQEDEWLSAAIDCLEYLPDQMVVEISRSFPEQPDRTDLVKELLFDAIGRYYSSREPLLNHLSDVHNGIAELLVNGKTEIALEATQLLLKLLDFQNREEFRRLLYFMAVAANPSEFKLQKESDNRMVVKRIFSKAIVDNKNLSKGKTDLLVLFLMDHQKDVFKIPGTLHKIVSVKLMAIQNGRDPNRDAGYIYCQRIDQRDYSNNTQKTTKDELLNLLKTIDEDSKLSAKEKKKLLGQFYKCHPDIFIEHFGD.

Residues 37–127 form the DEP domain; the sequence is LQTQVEVKKR…SSCSLYRFTT (91 aa).

This sequence belongs to the DEPDC7 family.

The chain is DEP domain-containing protein 7 (DEPDC7) from Macaca fascicularis (Crab-eating macaque).